Here is a 101-residue protein sequence, read N- to C-terminus: Large ribosomal subunit protein bL21 (101 aa).

It belongs to the bacterial ribosomal protein bL21 family. Part of the 50S ribosomal subunit. Contacts protein L20.

This protein binds to 23S rRNA in the presence of protein L20. This chain is Large ribosomal subunit protein bL21, found in Micrococcus luteus (strain ATCC 4698 / DSM 20030 / JCM 1464 / CCM 169 / CCUG 5858 / IAM 1056 / NBRC 3333 / NCIMB 9278 / NCTC 2665 / VKM Ac-2230) (Micrococcus lysodeikticus).